The chain runs to 485 residues: Delta(14)-sterol reductase ERG24A (485 aa).

4 helical membrane-spanning segments follow: residues 18–38 (FFGP…VYVF), 77–97 (GLVS…SLIL), 131–151 (LAVL…WTFM), and 155–175 (FIQI…FVYV). Asparagine 240 is a glycosylation site (N-linked (GlcNAc...) asparagine). Transmembrane regions (helical) follow at residues 259–279 (ILIT…EPAI), 285–305 (ITTD…VPYV), 319–339 (SLGP…FYIF), and 431–451 (AQGW…ILLI).

This sequence belongs to the ERG4/ERG24 family.

It localises to the endoplasmic reticulum membrane. The enzyme catalyses 4,4-dimethyl-5alpha-cholesta-8,24-dien-3beta-ol + NADP(+) = 4,4-dimethyl-5alpha-cholesta-8,14,24-trien-3beta-ol + NADPH + H(+). Its pathway is steroid metabolism; ergosterol biosynthesis. Functionally, delta(14)-sterol reductase; part of the third module of ergosterol biosynthesis pathway that includes the late steps of the pathway. Catalyzes the reduction of the C14=C15 double bond within 4,4,24-trimethyl ergosta-8,14,24(28)-trienolto produce 4,4-dimethylfecosterol. The third module or late pathway involves the ergosterol synthesis itself through consecutive reactions that mainly occur in the endoplasmic reticulum (ER) membrane. Firstly, the squalene synthase ERG9 catalyzes the condensation of 2 farnesyl pyrophosphate moieties to form squalene, which is the precursor of all steroids. Squalene synthase is crucial for balancing the incorporation of farnesyl diphosphate (FPP) into sterol and nonsterol isoprene synthesis. Secondly, squalene is converted into lanosterol by the consecutive action of the squalene epoxidase ERG1 and the lanosterol synthase ERG7. Then, the delta(24)-sterol C-methyltransferase ERG6 methylates lanosterol at C-24 to produce eburicol. Eburicol is the substrate of the sterol 14-alpha demethylase encoded by CYP51A, CYP51B and CYP51C, to yield 4,4,24-trimethyl ergosta-8,14,24(28)-trienol. CYP51B encodes the enzyme primarily responsible for sterol 14-alpha-demethylation, and plays an essential role in ascospore formation. CYP51A encodes an additional sterol 14-alpha-demethylase, induced on ergosterol depletion and responsible for the intrinsic variation in azole sensitivity. The third CYP51 isoform, CYP51C, does not encode a sterol 14-alpha-demethylase, but is required for full virulence on host wheat ears. The C-14 reductase ERG24 then reduces the C14=C15 double bond which leads to 4,4-dimethylfecosterol. A sequence of further demethylations at C-4, involving the C-4 demethylation complex containing the C-4 methylsterol oxidases ERG25, the sterol-4-alpha-carboxylate 3-dehydrogenase ERG26 and the 3-keto-steroid reductase ERG27, leads to the production of fecosterol via 4-methylfecosterol. ERG28 has a role as a scaffold to help anchor ERG25, ERG26 and ERG27 to the endoplasmic reticulum. The C-8 sterol isomerase ERG2 then catalyzes the reaction which results in unsaturation at C-7 in the B ring of sterols and thus converts fecosterol to episterol. The sterol-C5-desaturases ERG3A and ERG3BB then catalyze the introduction of a C-5 double bond in the B ring to produce 5-dehydroepisterol. The C-22 sterol desaturases ERG5A and ERG5B further convert 5-dehydroepisterol into ergosta-5,7,22,24(28)-tetraen-3beta-ol by forming the C-22(23) double bond in the sterol side chain. Finally, ergosta-5,7,22,24(28)-tetraen-3beta-ol is substrate of the C-24(28) sterol reductase ERG4 to produce ergosterol. In Gibberella zeae (strain ATCC MYA-4620 / CBS 123657 / FGSC 9075 / NRRL 31084 / PH-1) (Wheat head blight fungus), this protein is Delta(14)-sterol reductase ERG24A.